Consider the following 722-residue polypeptide: MALLVWSSLVVASLHLLGTAAYPSRSKYTVINENCPGAEWNIMCRDCCEYDQVECACPDGNQKVGYTIPCCRNEENECDSCLIHPGCSIFENCKSCNNGSWGGTLDDFYIKGSYCSECRMGWYGGDCMRCGEVIQAARGEIMLESYPFNARCEWSIQVAPGYTVELRFGMLSLEFDYMCQYDYLEVRDGDNVDAKILKRFCGNQRPLSLRSTGNSLHLLFQSDGSKNFDGFYVTFEEVTGCSSTPCFHDGTCIADKTGSYRCACLAGYTGRHCENVIEEKSCKDPGAPMNGYRKLPDGAGLSLANHIKVGFKIHYFCNNSYVLSGNQERACLQGAQWSGKQPVCIKACKEPKVADLVRQKVLPSLVQSRETPLHQLYSASFTKEKTDILPTKKPALPPGELPPGYQHLHTQLQYDCVSPFYRRTGSSRRTCLKTGKWSGRAPSCIPICGKLENFNITQLGEQRWPWQAALYRRSNGVKDASLRKGSWVLVCSGALLNERTVVMAAHCVTDLGKSSIIKVSDMKVVLGKFYRDDDREEKSQQHLHISAVIVNPNYDPILLDSDIAVIKLLDKARVSDYVQPVCLTLATEMITSPQEYTIVISGWKILSDPRAPGSKNETIRAGAIEPVDSLQCEQQYEENGISVSVTESMFCAKQEPRPSPSICPSETGGITTVLLPSPTSPEGSWHLIGLVSWGYDKSCRKDLYTGYTKVVTFKEWLEKNMK.

Positions M1 to A21 are cleaved as a signal peptide. Residue N98 is glycosylated (N-linked (GlcNAc...) asparagine). 8 cysteine pairs are disulfide-bonded: C130-C152, C179-C201, C241-C252, C246-C262, C264-C273, C282-C331, C317-C344, and C416-C444. A CUB domain is found at C130–V238. Residues E237–E274 enclose the EGF-like domain. 2 Sushi domains span residues K280–K346 and K393–P446. N-linked (GlcNAc...) asparagine glycosylation is present at N318. The region spanning I447 to K722 is the Peptidase S1 domain. A glycan (N-linked (GlcNAc...) asparagine) is linked at N455. An intrachain disulfide couples C491 to C507. N-linked (GlcNAc...) asparagine glycosylation occurs at N616. Disulfide bonds link C632–C651 and C663–C699.

It belongs to the peptidase S1 family.

The protein resides in the secreted. Its function is as follows. May play a role in regeneration of skeletal muscle. The polypeptide is Inactive serine protease PAMR1 (pamr1) (Xenopus tropicalis (Western clawed frog)).